Reading from the N-terminus, the 480-residue chain is 2-phosphoxylose phosphatase 1 (480 aa).

Topologically, residues 1-6 are cytoplasmic; it reads MLFRNR. Residues 7-27 traverse the membrane as a helical; Signal-anchor for type II membrane protein segment; the sequence is FLLLLALAALLAFVSLSLQFF. Residues 28–480 are Lumenal-facing; sequence HLIPVSTPKN…YYDACHREGF (453 aa). The Nucleophile role is filled by His97. N-linked (GlcNAc...) asparagine glycans are attached at residues Asn305 and Asn354. The active-site Proton donor is the Asp379.

The protein belongs to the histidine acid phosphatase family. In terms of assembly, interacts with B3GAT3; the interaction increases the 2-phosphoxylose phosphatase activity of PXYLP1 during completion of linkage region formation in a B3GAT3-mediated manner. As to expression, widely expressed. Strongly expressed in spleen, fetal liver, moderately in placenta, pancreas, kidney, thymus and colon.

Its subcellular location is the golgi apparatus membrane. The enzyme catalyses 3-O-[beta-D-GlcA-(1-&gt;3)-beta-D-Gal-(1-&gt;3)-beta-D-Gal-(1-&gt;4)-beta-D-2-O-P-Xyl]-L-seryl-[protein] + H2O = 3-O-(beta-D-GlcA-(1-&gt;3)-beta-D-Gal-(1-&gt;3)-beta-D-Gal-(1-&gt;4)-beta-D-Xyl)-L-seryl-[protein] + phosphate. Its function is as follows. Responsible for the 2-O-dephosphorylation of xylose in the glycosaminoglycan-protein linkage region of proteoglycans thereby regulating the amount of mature glycosaminoglycan (GAG) chains. Sulfated glycosaminoglycans (GAGs), including heparan sulfate and chondroitin sulfate, are synthesized on the so-called common GAG-protein linkage region (GlcUAbeta1-3Galbeta1-3Galbeta1-4Xylbeta1-O-Ser) of core proteins, which is formed by the stepwise addition of monosaccharide residues by the respective specific glycosyltransferases. Xylose 2-O-dephosphorylation during completion of linkage region formation is a prerequisite for the initiation and efficient elongation of the repeating disaccharide region of GAG chains. The chain is 2-phosphoxylose phosphatase 1 from Homo sapiens (Human).